Here is a 69-residue protein sequence, read N- to C-terminus: ATP synthase subunits region ORF 1 (69 aa).

The polypeptide is ATP synthase subunits region ORF 1 (Fuscovulum blasticum (Rhodobacter blasticus)).